Here is a 249-residue protein sequence, read N- to C-terminus: Aspartate/glutamate leucyltransferase (249 aa).

Belongs to the R-transferase family. Bpt subfamily.

The protein localises to the cytoplasm. It carries out the reaction N-terminal L-glutamyl-[protein] + L-leucyl-tRNA(Leu) = N-terminal L-leucyl-L-glutamyl-[protein] + tRNA(Leu) + H(+). It catalyses the reaction N-terminal L-aspartyl-[protein] + L-leucyl-tRNA(Leu) = N-terminal L-leucyl-L-aspartyl-[protein] + tRNA(Leu) + H(+). Functionally, functions in the N-end rule pathway of protein degradation where it conjugates Leu from its aminoacyl-tRNA to the N-termini of proteins containing an N-terminal aspartate or glutamate. The chain is Aspartate/glutamate leucyltransferase from Brucella canis (strain ATCC 23365 / NCTC 10854 / RM-666).